A 78-amino-acid polypeptide reads, in one-letter code: U7-lycotoxin-Ls1e (78 aa).

An N-terminal signal peptide occupies residues 1 to 22 (MKLIIFTGLALLLIVSLIDVEA). Positions 23-26 (QNEG) are excised as a propeptide.

Belongs to the neurotoxin 19 (CSTX) family. 07 (U7-Lctx) subfamily. In terms of processing, contains 4 disulfide bonds. In terms of tissue distribution, expressed by the venom gland.

The protein localises to the secreted. In Lycosa singoriensis (Wolf spider), this protein is U7-lycotoxin-Ls1e.